A 228-amino-acid polypeptide reads, in one-letter code: Triosephosphate isomerase (228 aa).

12–14 provides a ligand contact to substrate; the sequence is NFK. The active-site Electrophile is H96. The active-site Proton acceptor is the E144. Residues I149, G184, and 205 to 206 each bind substrate; that span reads AS.

The protein belongs to the triosephosphate isomerase family. As to quaternary structure, homotetramer; dimer of dimers.

It localises to the cytoplasm. The catalysed reaction is D-glyceraldehyde 3-phosphate = dihydroxyacetone phosphate. The protein operates within carbohydrate biosynthesis; gluconeogenesis. Its pathway is carbohydrate degradation; glycolysis; D-glyceraldehyde 3-phosphate from glycerone phosphate: step 1/1. Functionally, involved in the gluconeogenesis. Catalyzes stereospecifically the conversion of dihydroxyacetone phosphate (DHAP) to D-glyceraldehyde-3-phosphate (G3P). In Pyrococcus furiosus (strain ATCC 43587 / DSM 3638 / JCM 8422 / Vc1), this protein is Triosephosphate isomerase.